A 284-amino-acid polypeptide reads, in one-letter code: 2-dehydro-3-deoxyphosphooctonate aldolase (284 aa).

It belongs to the KdsA family.

The protein resides in the cytoplasm. It catalyses the reaction D-arabinose 5-phosphate + phosphoenolpyruvate + H2O = 3-deoxy-alpha-D-manno-2-octulosonate-8-phosphate + phosphate. It participates in carbohydrate biosynthesis; 3-deoxy-D-manno-octulosonate biosynthesis; 3-deoxy-D-manno-octulosonate from D-ribulose 5-phosphate: step 2/3. It functions in the pathway bacterial outer membrane biogenesis; lipopolysaccharide biosynthesis. In Paraburkholderia xenovorans (strain LB400), this protein is 2-dehydro-3-deoxyphosphooctonate aldolase.